The sequence spans 465 residues: GTPase Der (465 aa).

EngA-type G domains lie at P3 to G167 and I179 to L352. GTP-binding positions include G9–S16, D57–M61, N119–D122, G185–S192, D232–L236, and N297–D300. Positions R353–D437 constitute a KH-like domain.

It belongs to the TRAFAC class TrmE-Era-EngA-EngB-Septin-like GTPase superfamily. EngA (Der) GTPase family. Associates with the 50S ribosomal subunit.

GTPase that plays an essential role in the late steps of ribosome biogenesis. The protein is GTPase Der of Xylella fastidiosa (strain 9a5c).